Reading from the N-terminus, the 114-residue chain is Large ribosomal subunit protein uL22c (114 aa).

It belongs to the universal ribosomal protein uL22 family. In terms of assembly, part of the 50S ribosomal subunit.

The protein localises to the plastid. It is found in the chloroplast. Its function is as follows. This protein binds specifically to 23S rRNA. The globular domain of the protein is located near the polypeptide exit tunnel on the outside of the subunit, while an extended beta-hairpin is found that lines the wall of the exit tunnel in the center of the 70S ribosome. This is Large ribosomal subunit protein uL22c (rpl22) from Gracilaria tenuistipitata (Red alga).